We begin with the raw amino-acid sequence, 219 residues long: Guanylate kinase (219 aa).

Residues 15-194 enclose the Guanylate kinase-like domain; sequence GLMFVLSSPS…AFAEVHSILK (180 aa). 22–29 contributes to the ATP binding site; the sequence is SPSGAGKT.

Belongs to the guanylate kinase family.

The protein localises to the cytoplasm. It carries out the reaction GMP + ATP = GDP + ADP. Functionally, essential for recycling GMP and indirectly, cGMP. The protein is Guanylate kinase of Rhodopseudomonas palustris (strain BisB18).